Here is a 142-residue protein sequence, read N- to C-terminus: MRLLGLDVGSKTIGVAVSDPLGITAQSVMTIPIDEDRHNFGMRSLKKLVREYEANGFVLGLPKNMDGTAGRSVSRSKAMGERLEQKFGLPVYYDDERLTTVASERILVEEAGMHDRRQRKEVVDQMAAVLILQNYLDLQRKE.

It belongs to the YqgF nuclease family.

Its subcellular location is the cytoplasm. Functionally, could be a nuclease involved in processing of the 5'-end of pre-16S rRNA. This chain is Putative pre-16S rRNA nuclease, found in Lactobacillus delbrueckii subsp. bulgaricus (strain ATCC 11842 / DSM 20081 / BCRC 10696 / JCM 1002 / NBRC 13953 / NCIMB 11778 / NCTC 12712 / WDCM 00102 / Lb 14).